A 145-amino-acid polypeptide reads, in one-letter code: Hemoglobin subunit beta-3 (145 aa).

Residues 1–145 (MLTAEEKAAV…VANALAHRYH (145 aa)) enclose the Globin domain. Thr-11 carries the post-translational modification Phosphothreonine. Position 58 is an N6-acetyllysine (Lys-58). Heme b is bound at residue His-62. Lys-81 carries the post-translational modification N6-acetyllysine. Residue His-91 coordinates heme b. Cys-92 bears the S-nitrosocysteine mark.

It belongs to the globin family. Heterotetramer of two alpha chains and two beta chains. As to expression, red blood cells.

Its function is as follows. Involved in oxygen transport from the lung to the various peripheral tissues. The chain is Hemoglobin subunit beta-3 (HBB) from Odocoileus virginianus virginianus (Virginia white-tailed deer).